Here is a 348-residue protein sequence, read N- to C-terminus: Phospho-2-dehydro-3-deoxyheptonate aldolase, Trp-sensitive (348 aa).

This sequence belongs to the class-I DAHP synthase family.

It carries out the reaction D-erythrose 4-phosphate + phosphoenolpyruvate + H2O = 7-phospho-2-dehydro-3-deoxy-D-arabino-heptonate + phosphate. Its pathway is metabolic intermediate biosynthesis; chorismate biosynthesis; chorismate from D-erythrose 4-phosphate and phosphoenolpyruvate: step 1/7. Its function is as follows. Stereospecific condensation of phosphoenolpyruvate (PEP) and D-erythrose-4-phosphate (E4P) giving rise to 3-deoxy-D-arabino-heptulosonate-7-phosphate (DAHP). The protein is Phospho-2-dehydro-3-deoxyheptonate aldolase, Trp-sensitive (aroH) of Salmonella typhi.